Here is a 319-residue protein sequence, read N- to C-terminus: Acetyl-coenzyme A carboxylase carboxyl transferase subunit alpha (319 aa).

Positions 31–292 (EIDSAIRSLR…KTYLSRQLSE (262 aa)) constitute a CoA carboxyltransferase C-terminal domain.

It belongs to the AccA family. Acetyl-CoA carboxylase is a heterohexamer composed of biotin carboxyl carrier protein (AccB), biotin carboxylase (AccC) and two subunits each of ACCase subunit alpha (AccA) and ACCase subunit beta (AccD).

It localises to the cytoplasm. It carries out the reaction N(6)-carboxybiotinyl-L-lysyl-[protein] + acetyl-CoA = N(6)-biotinyl-L-lysyl-[protein] + malonyl-CoA. The protein operates within lipid metabolism; malonyl-CoA biosynthesis; malonyl-CoA from acetyl-CoA: step 1/1. In terms of biological role, component of the acetyl coenzyme A carboxylase (ACC) complex. First, biotin carboxylase catalyzes the carboxylation of biotin on its carrier protein (BCCP) and then the CO(2) group is transferred by the carboxyltransferase to acetyl-CoA to form malonyl-CoA. In Rhodopirellula baltica (strain DSM 10527 / NCIMB 13988 / SH1), this protein is Acetyl-coenzyme A carboxylase carboxyl transferase subunit alpha.